A 733-amino-acid polypeptide reads, in one-letter code: Polyribonucleotide nucleotidyltransferase (733 aa).

The tract at residues Asn404–Arg424 is disordered. 2 residues coordinate Mg(2+): Asp516 and Asp522. The 60-residue stretch at Pro582–Ile641 folds into the KH domain. Positions Gly653–Ala725 constitute an S1 motif domain.

The protein belongs to the polyribonucleotide nucleotidyltransferase family. Mg(2+) is required as a cofactor.

The protein resides in the cytoplasm. It carries out the reaction RNA(n+1) + phosphate = RNA(n) + a ribonucleoside 5'-diphosphate. Functionally, involved in mRNA degradation. Catalyzes the phosphorolysis of single-stranded polyribonucleotides processively in the 3'- to 5'-direction. The chain is Polyribonucleotide nucleotidyltransferase from Cutibacterium acnes (strain DSM 16379 / KPA171202) (Propionibacterium acnes).